A 355-amino-acid polypeptide reads, in one-letter code: D-alanine--D-alanine ligase (355 aa).

The ATP-grasp domain occupies 143-350; that stretch reads KQIFSNLSIP…IDQLVAKLID (208 aa). 178–233 serves as a coordination point for ATP; sequence IEKLNLPVFVKPANSGSSLGISKAKNKSEIIKALQKAWEIDSRIVIEEGLNVRELE. The Mg(2+) site is built by aspartate 303, glutamate 317, and asparagine 319.

This sequence belongs to the D-alanine--D-alanine ligase family. Mg(2+) serves as cofactor. The cofactor is Mn(2+).

It is found in the cytoplasm. It carries out the reaction 2 D-alanine + ATP = D-alanyl-D-alanine + ADP + phosphate + H(+). The protein operates within cell wall biogenesis; peptidoglycan biosynthesis. Functionally, cell wall formation. This is D-alanine--D-alanine ligase from Prochlorococcus marinus (strain MIT 9515).